The sequence spans 1380 residues: DNA-directed RNA polymerase subunit beta (1380 aa).

Belongs to the RNA polymerase beta chain family. In terms of assembly, the RNAP catalytic core consists of 2 alpha, 1 beta, 1 beta' and 1 omega subunit. When a sigma factor is associated with the core the holoenzyme is formed, which can initiate transcription.

It catalyses the reaction RNA(n) + a ribonucleoside 5'-triphosphate = RNA(n+1) + diphosphate. Its function is as follows. DNA-dependent RNA polymerase catalyzes the transcription of DNA into RNA using the four ribonucleoside triphosphates as substrates. This chain is DNA-directed RNA polymerase subunit beta, found in Nitrobacter winogradskyi (strain ATCC 25391 / DSM 10237 / CIP 104748 / NCIMB 11846 / Nb-255).